The chain runs to 255 residues: MAVGKNKRLSKGKKGLKKRTQDPFSRKDEYSVKAPSTFAVRDVGKTLVNRTTGLKNANDSLKGRIFEVSLADLQNDEDHAFRKVKLRVDEVQGKNCLTNFHGLDFTSDKLRSLVRKWQTLIEANVTVKTTDDYLLRLFAIAFTKRRPNQIKKTTYARSSQIRAIRKKITEIIQREASSRTLAQLTKLIPEVIGREIEKSTHGIYPLQNVHIRKVKLLKSPKFDLGALLALHGESSTDDKGQKVEREFKEQVLESV.

The span at 1–18 shows a compositional bias: basic residues; that stretch reads MAVGKNKRLSKGKKGLKK. The disordered stretch occupies residues 1 to 28; the sequence is MAVGKNKRLSKGKKGLKKRTQDPFSRKD. Residue alanine 2 is modified to N-acetylalanine; partial. Basic and acidic residues predominate over residues 19 to 28; it reads RTQDPFSRKD.

The protein belongs to the eukaryotic ribosomal protein eS1 family. In terms of assembly, component of the small ribosomal subunit. Mature ribosomes consist of a small (40S) and a large (60S) subunit. The 40S subunit contains about 33 different proteins and 1 molecule of RNA (18S). The 60S subunit contains about 49 different proteins and 3 molecules of RNA (25S, 5.8S and 5S).

The protein resides in the cytoplasm. This Ajellomyces capsulatus (strain NAm1 / WU24) (Darling's disease fungus) protein is Small ribosomal subunit protein eS1.